We begin with the raw amino-acid sequence, 368 residues long: Phosphate acyltransferase (368 aa).

The tract at residues 335–368 is disordered; that stretch reads VSLGDGEHDAGGAGPASPAAGHHAEPSAAQSSKA. Residues 349 to 368 show a composition bias toward low complexity; that stretch reads PASPAAGHHAEPSAAQSSKA.

The protein belongs to the PlsX family. Homodimer. Probably interacts with PlsY.

The protein localises to the cytoplasm. It carries out the reaction a fatty acyl-[ACP] + phosphate = an acyl phosphate + holo-[ACP]. It participates in lipid metabolism; phospholipid metabolism. Functionally, catalyzes the reversible formation of acyl-phosphate (acyl-PO(4)) from acyl-[acyl-carrier-protein] (acyl-ACP). This enzyme utilizes acyl-ACP as fatty acyl donor, but not acyl-CoA. This Burkholderia multivorans (strain ATCC 17616 / 249) protein is Phosphate acyltransferase.